The following is a 127-amino-acid chain: Protein ApaG (127 aa).

Positions 3–127 (DTNKYRIEVQ…FVLASPRALH (125 aa)) constitute an ApaG domain.

This is Protein ApaG from Dechloromonas aromatica (strain RCB).